The chain runs to 162 residues: Ribosomal RNA large subunit methyltransferase H (162 aa).

S-adenosyl-L-methionine is bound by residues leucine 78, glycine 109, and 128–133 (LSPLTL).

This sequence belongs to the RNA methyltransferase RlmH family. In terms of assembly, homodimer.

It localises to the cytoplasm. The catalysed reaction is pseudouridine(1915) in 23S rRNA + S-adenosyl-L-methionine = N(3)-methylpseudouridine(1915) in 23S rRNA + S-adenosyl-L-homocysteine + H(+). Its function is as follows. Specifically methylates the pseudouridine at position 1915 (m3Psi1915) in 23S rRNA. This is Ribosomal RNA large subunit methyltransferase H from Psychrobacter sp. (strain PRwf-1).